A 32-amino-acid chain; its full sequence is Lectin (32 aa).

The protein belongs to the leguminous lectin family. As to quaternary structure, homotetramer.

Metalloglycoprotein, containing Ca, Mg, Mn, and Zn and the carbohydrates galactose, glucosamine, mannose, and fucose. It agglutinates erythrocytes of blood group A1. This chain is Lectin, found in Macrotyloma axillare (Perennial horse gram).